A 327-amino-acid chain; its full sequence is Flotillin-like protein FloA (327 aa).

The helical transmembrane segment at 7-27 threads the bilayer; it reads FLVPILIVILLLVFFSLVPVG.

It belongs to the flotillin-like FloA family. As to quaternary structure, homooligomerizes.

Its subcellular location is the cell membrane. It is found in the membrane raft. In terms of biological role, found in functional membrane microdomains (FMM) that may be equivalent to eukaryotic membrane rafts. FMMs are highly dynamic and increase in number as cells age. Flotillins are thought to be important factors in membrane fluidity. In Finegoldia magna (strain ATCC 29328 / DSM 20472 / WAL 2508) (Peptostreptococcus magnus), this protein is Flotillin-like protein FloA.